The chain runs to 96 residues: Cytoplasmic envelopment protein 3 (96 aa).

The N-myristoyl glycine; by host moiety is linked to residue Gly2. The short motif at 18 to 19 (LI) is the Di-leucine-like internalization motif element. Residues 37 to 43 (DIESEEE) are asp/Glu-rich (acidic). Position 40 is a phosphoserine (Ser40). The tract at residues 44-96 (GNFYVPPDMRGVTRAPGRQRLRSSDPPSRHTHRRTPGGACPATQFPPPMSDSE) is disordered. Over residues 87–96 (QFPPPMSDSE) the composition is skewed to pro residues.

Belongs to the herpesviridae cytoplasmic envelopment protein 3 family. As to quaternary structure, interacts with cytoplasmic envelopment protein 2; this interaction is essential for the proper localization of each protein to the assembly complex and thus for the production of infectious virus. Interacts with gE (via C-terminus). Interacts with gD (via C-terminus). Interacts with UL56. Myristoylation and palmitoylation (probably on one or more of the nearby cysteines at the N-terminus) enable membrane-binding and Golgi apparatus-specific targeting and are essential for efficient packaging. Post-translationally, phosphorylated. Phosphorylation does not seem to be required for recycling to the host Golgi apparatus. Packaging is selective for underphosphorylated forms.

It localises to the virion tegument. The protein localises to the virion membrane. Its subcellular location is the host cell membrane. The protein resides in the host Golgi apparatus membrane. Functionally, plays an important role in the cytoplasmic envelopment of tegument proteins and capsids during the assembly and egress processes. Also participates in viral entry at the fusion step probably by regulating the core fusion machinery. The sequence is that of Cytoplasmic envelopment protein 3 from Homo sapiens (Human).